A 285-amino-acid chain; its full sequence is Formate channel FocA (285 aa).

Residues 1–30 lie on the Cytoplasmic side of the membrane; the sequence is MKADNPFDLLLPAAMAKVAEEAGVYKATKH. The chain crosses the membrane as a helical span at residues 31–56; it reads PLKTFYLAITAGVFISIAFVFYITAT. The Periplasmic segment spans residues 57 to 64; the sequence is TGTGTMPF. A helical transmembrane segment spans residues 65–85; it reads GMAKLVGGICFSLGLILCVVC. Topologically, residues 86-112 are cytoplasmic; the sequence is GADLFTSTVLIVVAKASGRITWGQLAK. The chain crosses the membrane as a helical span at residues 113–135; that stretch reads NWLNVYFGNLVGALLFVLLMWLS. The Periplasmic portion of the chain corresponds to 136-160; the sequence is GEYMTANGQWGLNVLQTADHKVHHT. The helical transmembrane segment at 161–181 threads the bilayer; sequence FIEAVCLGILANLMVCLAVWM. The Cytoplasmic portion of the chain corresponds to 182–187; the sequence is SYSGRS. The helical transmembrane segment at 188–205 threads the bilayer; it reads LMDKAFIMVLPVAMFVAS. Residues 206 to 249 are Periplasmic-facing; that stretch reads GFEHSIANMFMIPMGIVIRDFASPEFWTAVGSAPENFSHLTVMN. Residues 250 to 276 traverse the membrane as a helical segment; that stretch reads FITDNLIPVTIGNIIGGGLLVGLTYWV. Over 277–285 the chain is Cytoplasmic; sequence IYLRENDHH.

The protein belongs to the FNT transporter (TC 1.A.16) family. As to quaternary structure, homopentamer.

It localises to the cell inner membrane. It carries out the reaction formate(in) = formate(out). Involved in the bidirectional transport of formate during mixed-acid fermentation. Functions to maintain relatively constant intracellular formate levels during growth, using different mechanisms for efflux and uptake of the anion. Is impermeable to water. This is Formate channel FocA from Escherichia coli O157:H7.